We begin with the raw amino-acid sequence, 368 residues long: Phospho-N-acetylmuramoyl-pentapeptide-transferase (368 aa).

Transmembrane regions (helical) follow at residues 2 to 22 (IALIIGILTSLIITLVGTPLL), 51 to 71 (TLGGVVIVLAVVLGWCASALY), 80 to 100 (PTWAAILALFAMVSMGVLGFI), 116 to 136 (VGGKFFGQVVFATIFAVLALI), 166 to 186 (IVAIILFVIWVNFLMAAWTNA), 193 to 213 (LDGLCAGSSMIAFVGYAIIAM), 234 to 254 (PLDLGIIACCAAVACLGFLWY), 256 to 276 (CNPASIFMGDTGSLALGGLFA), 277 to 297 (ALSIITHTEFLAMIIGGLFVV), and 340 to 360 (FWIVELMFVITGLIIFYGNWV).

It belongs to the glycosyltransferase 4 family. MraY subfamily. Requires Mg(2+) as cofactor.

It localises to the cell membrane. The catalysed reaction is UDP-N-acetyl-alpha-D-muramoyl-L-alanyl-gamma-D-glutamyl-meso-2,6-diaminopimeloyl-D-alanyl-D-alanine + di-trans,octa-cis-undecaprenyl phosphate = di-trans,octa-cis-undecaprenyl diphospho-N-acetyl-alpha-D-muramoyl-L-alanyl-D-glutamyl-meso-2,6-diaminopimeloyl-D-alanyl-D-alanine + UMP. Its pathway is cell wall biogenesis; peptidoglycan biosynthesis. In terms of biological role, catalyzes the initial step of the lipid cycle reactions in the biosynthesis of the cell wall peptidoglycan: transfers peptidoglycan precursor phospho-MurNAc-pentapeptide from UDP-MurNAc-pentapeptide onto the lipid carrier undecaprenyl phosphate, yielding undecaprenyl-pyrophosphoryl-MurNAc-pentapeptide, known as lipid I. The protein is Phospho-N-acetylmuramoyl-pentapeptide-transferase of Bifidobacterium animalis subsp. lactis (strain AD011).